The following is a 394-amino-acid chain: Elongation factor Tu (394 aa).

Residues 10-204 enclose the tr-type G domain; the sequence is KEHVNVGTIG…AVDTYIENPV (195 aa). Positions 19 to 26 are G1; that stretch reads GHVDHGKT. 19 to 26 provides a ligand contact to GTP; that stretch reads GHVDHGKT. Thr-26 provides a ligand contact to Mg(2+). Residues 60 to 64 form a G2 region; sequence GITIN. The tract at residues 81–84 is G3; it reads DCPG. GTP is bound by residues 81–85 and 136–139; these read DCPGH and NKCD. The interval 136–139 is G4; sequence NKCD. A G5 region spans residues 174–176; sequence SAL.

Belongs to the TRAFAC class translation factor GTPase superfamily. Classic translation factor GTPase family. EF-Tu/EF-1A subfamily. Monomer.

The protein resides in the cytoplasm. It catalyses the reaction GTP + H2O = GDP + phosphate + H(+). GTP hydrolase that promotes the GTP-dependent binding of aminoacyl-tRNA to the A-site of ribosomes during protein biosynthesis. The protein is Elongation factor Tu of Mycoplasmopsis synoviae (strain 53) (Mycoplasma synoviae).